Consider the following 298-residue polypeptide: Probable endonuclease 4 (298 aa).

Zn(2+) is bound by residues histidine 69, histidine 111, glutamate 146, aspartate 180, histidine 183, histidine 215, aspartate 228, histidine 230, and glutamate 260.

Belongs to the AP endonuclease 2 family. Zn(2+) is required as a cofactor.

The enzyme catalyses Endonucleolytic cleavage to 5'-phosphooligonucleotide end-products.. Functionally, endonuclease IV plays a role in DNA repair. It cleaves phosphodiester bonds at apurinic or apyrimidinic (AP) sites, generating a 3'-hydroxyl group and a 5'-terminal sugar phosphate. The protein is Probable endonuclease 4 of Bacillus cereus (strain B4264).